A 227-amino-acid polypeptide reads, in one-letter code: uncharacterized protein (227 aa).

This is an uncharacterized protein from Schizosaccharomyces pombe (strain 972 / ATCC 24843) (Fission yeast).